Reading from the N-terminus, the 674-residue chain is MPPPAEEFAVDDLDEFESRLDSFLNRFHADDLRRILLPDPDGKLHFPLVIDFAELLEFDPEVAHQLYDYPKDVLELFDAAAQRALDKFDAAARRADKRKAGDEPMEKKFVHVRVNTSGSPLECPEASPSIGKVRVKHRGTLLTLKGTVIRSGGVKMIEGERKYQCRKCKCRFTVHPELEAGNRITLPASCKSKSAKGCGGANFQLIEDSITCHDYQEIKIQENIQLLGVGSIPRSMPIILMDDLVDIVKAGDDVVVTGRLSAKWSPDIKDVRSNLDPMLIANFVRRTNELKSDLDIPVEIINKFEEFWAASRATPLKGRNSILKGICPQIYGLFTVKLAVALTLIGGVQHVDASGTKVRGEPHMLLVGDPGTGKSQFLKFAAKLSNRSVITTGLGSTSAGLTVTAVKDGGEWMLEAGALVLADGGLCCIDEFDSMREHDRTTIHEAMEQQTISIAKAGLVTTLNTRTTVFGATNPKGQYDPNESLSVNTTLSGPLLSRFDIVLVLLDTKNKKWDKIVSSHILAENTEEKKGKTSDPEVMWTLSMLRRYIHYVKQHFKPVLTKEAERVISSYYQRQRQSGTRNAARTTVRMLESLIRLAQAHARLMFRNDVTKLDAIAAILCIESSMTTSAIVDTAGNALHSNFTENPDQECILKCDSIAYLSKNIKYLTDEISN.

Residues 165–198 form a C4-type zinc finger; that stretch reads CRKCKCRFTVHPELEAGNRITLPASCKSKSAKGC. Residues 318–521 form the MCM domain; it reads GRNSILKGIC…KWDKIVSSHI (204 aa). 368–375 is a binding site for ATP; sequence GDPGTGKS. Positions 497-500 match the Arginine finger motif; it reads SRFD.

The protein belongs to the MCM family.

The protein localises to the nucleus. The enzyme catalyses ATP + H2O = ADP + phosphate + H(+). Probable DNA helicase that may play a role in DNA repair during meiosis. This is Probable DNA helicase MCM9 (MCM9) from Oryza sativa subsp. indica (Rice).